Here is a 313-residue protein sequence, read N- to C-terminus: Homoserine O-succinyltransferase (313 aa).

The active-site Acyl-thioester intermediate is the Cys142. Substrate is bound by residues Lys163 and Ser192. The active-site Proton acceptor is the His235. The active site involves Glu237. Substrate is bound at residue Arg249.

Belongs to the MetA family.

It is found in the cytoplasm. The enzyme catalyses L-homoserine + succinyl-CoA = O-succinyl-L-homoserine + CoA. Its pathway is amino-acid biosynthesis; L-methionine biosynthesis via de novo pathway; O-succinyl-L-homoserine from L-homoserine: step 1/1. Functionally, transfers a succinyl group from succinyl-CoA to L-homoserine, forming succinyl-L-homoserine. In Vibrio parahaemolyticus serotype O3:K6 (strain RIMD 2210633), this protein is Homoserine O-succinyltransferase.